A 155-amino-acid polypeptide reads, in one-letter code: Small ribosomal subunit protein uS7cz/uS7cy (155 aa).

It belongs to the universal ribosomal protein uS7 family. Part of the 30S ribosomal subunit.

It is found in the plastid. The protein localises to the chloroplast. Functionally, one of the primary rRNA binding proteins, it binds directly to 16S rRNA where it nucleates assembly of the head domain of the 30S subunit. The protein is Small ribosomal subunit protein uS7cz/uS7cy (rps7-A) of Nandina domestica (Heavenly bamboo).